The chain runs to 105 residues: Photosystem II 5 kDa protein, chloroplastic (105 aa).

The transit peptide at 1–77 (MASITMTTSF…ICSVAGVATA (77 aa)) directs the protein to the chloroplast.

In terms of processing, the maturation of the PSII-T precursor to its final form occurs through a two step process. First, a stromal intermediate is formed, which, upon translocation into the thylakoid membrane, is processed to the mature protein.

The protein localises to the plastid. Its subcellular location is the chloroplast thylakoid membrane. Functionally, may be a component of the oxygen-evolving complex. The protein is Photosystem II 5 kDa protein, chloroplastic (PSBT) of Gossypium hirsutum (Upland cotton).